The chain runs to 375 residues: Sperm microtubule associated protein 2 (375 aa).

A disordered region spans residues 1–78 (MGELGEHRAS…MAGEELPETS (78 aa)). Positions 59 to 75 (EPEEEIPPEEMAGEELP) are enriched in acidic residues. THEG repeat units follow at residues 110–129 (AKGRKKRSRRLLELAKPKTN), 176–195 (TITVPVVSQRMEELSRPKRF), 214–233 (STLEYQASNRLKQLATPKVR), 250–269 (AAQMAVPTPRTLRLAKPRPP), 282–301 (PKPYVSDYNRLLQLATPKAL), 318–337 (VTKNAVASSRIISLAQPKIR), and 352–371 (ASLVAQASPRIYELATPKYI). Ser287 is modified (phosphoserine).

Interacts with CCT5. Testis specific (at protein level). Specifically expressed in spermatids; Sertoli cells maintain the level of expression in spermatids. If isolated spermatids are cultivated for 16 hours alone, the expression of THEG is down-regulated. May require signals from Sertoli cells to initiate changes in its gene expression through spermatogenesis.

The protein localises to the nucleus. Its function is as follows. May be involved (but not essential) in spermatogenesis. The sequence is that of Sperm microtubule associated protein 2 from Mus musculus (Mouse).